Consider the following 120-residue polypeptide: Myohemerythrin (120 aa).

Residues His26, His56, Glu60, His75, His79, His108, and Asp113 each contribute to the Fe cation site.

This sequence belongs to the hemerythrin family.

Functionally, myohemerythrin is an oxygen-binding protein found in the retractor muscles of certain worms. The oxygen-binding site contains two iron atoms. The polypeptide is Myohemerythrin (Sipunculus nudus (Sipunculan worm)).